The sequence spans 346 residues: Uroporphyrinogen decarboxylase (346 aa).

Substrate is bound by residues 26 to 30 (RQAGR), Asp-76, Tyr-153, Ser-208, and His-323.

This sequence belongs to the uroporphyrinogen decarboxylase family. In terms of assembly, homodimer.

The protein localises to the cytoplasm. It carries out the reaction uroporphyrinogen III + 4 H(+) = coproporphyrinogen III + 4 CO2. Its pathway is porphyrin-containing compound metabolism; protoporphyrin-IX biosynthesis; coproporphyrinogen-III from 5-aminolevulinate: step 4/4. Its function is as follows. Catalyzes the decarboxylation of four acetate groups of uroporphyrinogen-III to yield coproporphyrinogen-III. This Prochlorococcus marinus (strain MIT 9215) protein is Uroporphyrinogen decarboxylase.